The following is a 359-amino-acid chain: Ornithine cyclodeaminase (359 aa).

The L-ornithine site is built by Arg-53 and Lys-77. NAD(+) contacts are provided by residues Thr-92, Arg-120, 147-148 (AQ), Asp-169, Thr-209, 232-235 (VGGD), Lys-239, and Ser-300. Arg-120 contacts L-ornithine. Asp-235 lines the L-ornithine pocket. The active-site Proton donor/acceptor is Asp-235. An L-ornithine-binding site is contributed by Val-301.

The protein belongs to the ornithine cyclodeaminase/mu-crystallin family. The cofactor is NAD(+).

The enzyme catalyses L-ornithine = L-proline + NH4(+). It functions in the pathway amino-acid biosynthesis; L-proline biosynthesis; L-proline from L-ornithine: step 1/1. Its function is as follows. Catalyzes the conversion of L-ornithine into L-proline with release of ammonia. The chain is Ornithine cyclodeaminase from Brucella abortus biovar 1 (strain 9-941).